The following is a 104-amino-acid chain: Flagellar hook-basal body complex protein FliE (104 aa).

The protein belongs to the FliE family.

It is found in the bacterial flagellum basal body. In Salmonella newport (strain SL254), this protein is Flagellar hook-basal body complex protein FliE.